An 879-amino-acid polypeptide reads, in one-letter code: Probable phospholipid transport protein YdbH (879 aa).

The Cytoplasmic segment spans residues Met1–Lys6. A helical transmembrane segment spans residues Ala7 to Trp29. Residues Val30–Gln879 lie on the Periplasmic side of the membrane.

As to quaternary structure, interacts with the outer membrane lipoprotein YnbE.

Its subcellular location is the cell inner membrane. In terms of biological role, involved in outer membrane lipid homeostasis. Interacts with the outer membrane lipoprotein YnbE to form a functional protein bridge connecting the inner and outer membranes of the cell. Likely transports phospholipids between the inner membrane and the outer membrane. It would provide a bridge-like structure that protects phospholipids as they travel across the periplasm. Functionally, tamB, YdbH and YhdP are redundant, but not equivalent, in performing an essential function for growth and maintaining lipid homeostasis in the outer membrane. Any of these three proteins is sufficient for growth. This chain is Probable phospholipid transport protein YdbH (ydbH), found in Escherichia coli (strain K12).